Consider the following 186-residue polypeptide: Probable chorismate pyruvate-lyase (186 aa).

R80, L118, and E170 together coordinate substrate.

This sequence belongs to the UbiC family.

Its subcellular location is the cytoplasm. It catalyses the reaction chorismate = 4-hydroxybenzoate + pyruvate. Its pathway is cofactor biosynthesis; ubiquinone biosynthesis. In terms of biological role, removes the pyruvyl group from chorismate, with concomitant aromatization of the ring, to provide 4-hydroxybenzoate (4HB) for the ubiquinone pathway. This Pseudomonas savastanoi pv. phaseolicola (strain 1448A / Race 6) (Pseudomonas syringae pv. phaseolicola (strain 1448A / Race 6)) protein is Probable chorismate pyruvate-lyase.